The chain runs to 544 residues: Chaperonin GroEL (544 aa).

ATP is bound by residues 29-32 (TLGP), 86-90 (DGTTT), Gly-413, 478-480 (NAA), and Asp-494.

This sequence belongs to the chaperonin (HSP60) family. Forms a cylinder of 14 subunits composed of two heptameric rings stacked back-to-back. Interacts with the co-chaperonin GroES.

The protein resides in the cytoplasm. The catalysed reaction is ATP + H2O + a folded polypeptide = ADP + phosphate + an unfolded polypeptide.. Together with its co-chaperonin GroES, plays an essential role in assisting protein folding. The GroEL-GroES system forms a nano-cage that allows encapsulation of the non-native substrate proteins and provides a physical environment optimized to promote and accelerate protein folding. This Lysinibacillus sphaericus (strain C3-41) protein is Chaperonin GroEL.